An 838-amino-acid polypeptide reads, in one-letter code: Probable glucan 1,3-beta-glucosidase D (838 aa).

Basic and acidic residues predominate over residues 1–23 (MPSHSRSRDRYRGRDESEPERDR). The disordered stretch occupies residues 1 to 298 (MPSHSRSRDR…GASDSDMDGA (298 aa)). Over 1–310 (MPSHSRSRDR…GTPFWKKKKT (310 aa)) the chain is Cytoplasmic. Over residues 35 to 45 (DYEDDELDDDD) the composition is skewed to acidic residues. 4 stretches are compositionally biased toward basic and acidic residues: residues 111–124 (DSPR…DGDR), 149–164 (SRDD…EREA), 200–221 (AKLR…AKAE), and 234–246 (QPRR…EETP). Residues 311–331 (WIAVGVVVVLLAIIIPVAVVV) form a helical; Signal-anchor for type II membrane protein membrane-spanning segment. Residues 332-838 (SKKNNEKKSD…PDFGDLPENY (507 aa)) lie on the Extracellular side of the membrane. The disordered stretch occupies residues 335–359 (NNEKKSDSTTDDTTPRNSNLDGISR). N-linked (GlcNAc...) asparagine glycosylation is found at N383, N388, N400, N553, and N565. E604 serves as the catalytic Proton donor. Residues N643 and N696 are each glycosylated (N-linked (GlcNAc...) asparagine). E709 serves as the catalytic Nucleophile.

Belongs to the glycosyl hydrolase 5 (cellulase A) family.

Its subcellular location is the cell membrane. It carries out the reaction Successive hydrolysis of beta-D-glucose units from the non-reducing ends of (1-&gt;3)-beta-D-glucans, releasing alpha-glucose.. Glucosidase involved in the degradation of cellulosic biomass. Active on lichenan. This chain is Probable glucan 1,3-beta-glucosidase D (exgD), found in Aspergillus terreus (strain NIH 2624 / FGSC A1156).